Consider the following 594-residue polypeptide: Putative aldehyde oxidase Art an 7 (594 aa).

Residues 1–23 form the signal peptide; the sequence is MASSIKTVILFLLPLLLAYSVLA. Residues 28–56 are disordered; sequence TDGGDKPGPEIDDGGGDKPVPGNNDGASD.

Post-translationally, the N-terminus is blocked. In terms of processing, glycosylated. In terms of tissue distribution, expressed in pollen (at protein level).

The protein resides in the cytoplasm. The catalysed reaction is an aldehyde + O2 + H2O = a carboxylate + H2O2 + H(+). Functionally, catalyzes the oxidation of aldehydes to the corresponding carboxylate by coupling the reaction to the reduction of dioxygen to hydrogen peroxide. Substrates include glyoxal and other aldehydes. Does not have enzymatic activity on D-galactose. This is Putative aldehyde oxidase Art an 7 from Artemisia annua (Sweet wormwood).